The chain runs to 314 residues: Probable 5-dehydro-4-deoxyglucarate dehydratase (314 aa).

It belongs to the DapA family.

It carries out the reaction 5-dehydro-4-deoxy-D-glucarate + H(+) = 2,5-dioxopentanoate + CO2 + H2O. The protein operates within carbohydrate acid metabolism; D-glucarate degradation; 2,5-dioxopentanoate from D-glucarate: step 2/2. This chain is Probable 5-dehydro-4-deoxyglucarate dehydratase, found in Bradyrhizobium diazoefficiens (strain JCM 10833 / BCRC 13528 / IAM 13628 / NBRC 14792 / USDA 110).